Here is a 469-residue protein sequence, read N- to C-terminus: UDP-N-acetylmuramate--L-alanine ligase (469 aa).

Residue 113–119 (GAHGKTT) coordinates ATP.

Belongs to the MurCDEF family.

It is found in the cytoplasm. It carries out the reaction UDP-N-acetyl-alpha-D-muramate + L-alanine + ATP = UDP-N-acetyl-alpha-D-muramoyl-L-alanine + ADP + phosphate + H(+). The protein operates within cell wall biogenesis; peptidoglycan biosynthesis. Its function is as follows. Cell wall formation. The protein is UDP-N-acetylmuramate--L-alanine ligase of Syntrophobacter fumaroxidans (strain DSM 10017 / MPOB).